Here is a 621-residue protein sequence, read N- to C-terminus: ATP-dependent DNA helicase Q1 (621 aa).

Positions 100-275 (VNATMARKDI…QKILCVEKCL (176 aa)) constitute a Helicase ATP-binding domain. 113–120 (MPTGGGKS) contacts ATP. The DEVH box signature appears at 219–222 (DEVH). One can recognise a Helicase C-terminal domain in the interval 296–451 (SAEDFIENIA…EMVSYCQNIS (156 aa)). Residues Cys-453, Cys-471, Cys-475, and Cys-478 each coordinate Zn(2+). N6-acetyllysine is present on residues Lys-514 and Lys-522. Ser-597 and Ser-602 each carry phosphoserine.

This sequence belongs to the helicase family. RecQ subfamily. In terms of assembly, may form homodimers or higher order oligomers. Interacts with EXO1. Interacts with MLH1. Interacts with PARP1. Requires Mg(2+) as cofactor. Mn(2+) is required as a cofactor. The cofactor is Zn(2+).

Its subcellular location is the nucleus. It carries out the reaction Couples ATP hydrolysis with the unwinding of duplex DNA by translocating in the 3'-5' direction.. It catalyses the reaction ATP + H2O = ADP + phosphate + H(+). The enzyme catalyses dATP + H2O = dADP + phosphate + H(+). Functionally, DNA helicase that plays a role in DNA damage repair and genome stability. Exhibits a magnesium- and ATP-dependent DNA-helicase activity that unwinds single- and double-stranded DNA in a 3'-5' direction. Plays a role in restoring regressed replication forks. Required to restart stalled replication forks induced by abortive topoisomerase 1 and 2 lesions. May play a role in the repair of DNA that is damaged by ultraviolet light or other mutagens. This chain is ATP-dependent DNA helicase Q1 (Recql), found in Rattus norvegicus (Rat).